A 205-amino-acid polypeptide reads, in one-letter code: Protein DEPP1 (205 aa).

2 stretches are compositionally biased toward polar residues: residues 55 to 64 (DKVTAQSRPN) and 83 to 101 (GDSS…SPGT). Residues 55 to 171 (DKVTAQSRPN…RHQTSDLKSW (117 aa)) are disordered. Basic and acidic residues predominate over residues 138–155 (MGKDTGRLCEARVPEHSL).

The protein resides in the cytoplasm. It localises to the peroxisome. It is found in the mitochondrion. In terms of biological role, acts as a critical modulator of FOXO3-induced autophagy via increased cellular ROS. This is Protein DEPP1 (Depp1) from Mus musculus (Mouse).